Here is a 469-residue protein sequence, read N- to C-terminus: 6-phospho-beta-galactosidase (469 aa).

Residues Q18, H115, N158, E159, and N296 each coordinate D-galactose 6-phosphate. Residue E159 is the Proton donor of the active site. Residue E374 is the Nucleophile of the active site. D-galactose 6-phosphate is bound by residues S429, W430, K436, and Y438.

It belongs to the glycosyl hydrolase 1 family.

The catalysed reaction is a 6-phospho-beta-D-galactoside + H2O = D-galactose 6-phosphate + an alcohol. It functions in the pathway carbohydrate metabolism; lactose degradation; D-galactose 6-phosphate and beta-D-glucose from lactose 6-phosphate: step 1/1. The chain is 6-phospho-beta-galactosidase from Staphylococcus haemolyticus (strain JCSC1435).